A 78-amino-acid chain; its full sequence is NEDD8-like protein RUB3 (78 aa).

G76 is covalently cross-linked (Glycyl lysine isopeptide (Gly-Lys) (interchain with K-? in acceptor proteins)). Positions 77–78 are excised as a propeptide; sequence CC.

In terms of tissue distribution, detected in stems and flower buds, but not in leaves, mature flowers and seedlings.

Its function is as follows. May function as a stable post-translational protein modifier. In Arabidopsis thaliana (Mouse-ear cress), this protein is NEDD8-like protein RUB3 (RUB3).